The following is a 313-amino-acid chain: Ankyrin repeat family A protein 2 (313 aa).

ANK repeat units lie at residues 148–180 (ANSL…HTDE), 181–213 (EGFT…LLGK), 214–246 (GRES…EYDW), 247–279 (NGGT…IETD), and 280–313 (SGYN…NIKE).

Interacts (via ANK repeats) with CCDC8 (via PxLPxI/L motif); mediates the interaction with the 3M complex which is composed of CCDC8, CUL7 and OBSL1. Interacts (via ANK repeats) with HDAC4 (via PxLPxI/L motif). Interacts (via ANK repeats) with HDAC5 (via PxLPxI/L motif). Interacts (via ANK repeats) with LRP2/megalin (via PxLPxI/L motif). Interacts (via ANK repeats) with RFX7 (via PxLPxI/L motif). Interacts with AHRR. Interacts with NEK6.

The protein resides in the cytoplasm. It is found in the cytoskeleton. The protein localises to the membrane. May regulate the interaction between the 3M complex and the histone deacetylases HDAC4 and HDAC5. May also regulate LRP2/megalin. The sequence is that of Ankyrin repeat family A protein 2 (ANKRA2) from Homo sapiens (Human).